The chain runs to 286 residues: Ribosomal RNA small subunit methyltransferase I (286 aa).

This sequence belongs to the methyltransferase superfamily. RsmI family.

Its subcellular location is the cytoplasm. It carries out the reaction cytidine(1402) in 16S rRNA + S-adenosyl-L-methionine = 2'-O-methylcytidine(1402) in 16S rRNA + S-adenosyl-L-homocysteine + H(+). Catalyzes the 2'-O-methylation of the ribose of cytidine 1402 (C1402) in 16S rRNA. The sequence is that of Ribosomal RNA small subunit methyltransferase I from Escherichia coli O157:H7.